The chain runs to 790 residues: Probable E3 ubiquitin-protein ligase MARCHF10 (790 aa).

A disordered region spans residues 33-240 (LKRQEHKKEP…PQNEPHTALS (208 aa)). A compositionally biased stretch (basic and acidic residues) spans 34–48 (KRQEHKKEPNEKKQE). The segment covering 61-70 (FSSGSSCKQS) has biased composition (low complexity). The residue at position 78 (Ser78) is a Phosphoserine. Residues 218–227 (PLERQKKGDP) are compositionally biased toward basic and acidic residues. Residues 230–240 (RPQNEPHTALS) are compositionally biased toward polar residues. Positions 284–308 (LSLNNEQENYDTEEETRTEEELLLA) form a coiled coil. 2 disordered regions span residues 323-416 (GTSA…EDVS) and 507-569 (LSPI…RHLQ). Polar residues-rich tracts occupy residues 355–370 (RKTSVTEPTTKQSSPG), 406–416 (GVTQVSAEDVS), and 511–520 (RNRNPSAASE). Positions 521-533 (SHSEDTQGEEERA) are enriched in basic and acidic residues. Positions 534–563 (STSQAQESPLLSDLPNPQSSMALGDSPSSP) are enriched in polar residues. The RING-CH-type zinc finger occupies 633 to 703 (DSEEEGDLCR…EMCKQGLLVD (71 aa)). 8 residues coordinate Zn(2+): Cys641, Cys644, Cys659, Cys661, His669, Cys672, Cys693, and Cys696. The interval 757 to 790 (ERMSRNYPQPRPEESESSESGDGNESNVYPGRVI) is disordered. Residues 774 to 783 (SESGDGNESN) show a composition bias toward low complexity.

The enzyme catalyses S-ubiquitinyl-[E2 ubiquitin-conjugating enzyme]-L-cysteine + [acceptor protein]-L-lysine = [E2 ubiquitin-conjugating enzyme]-L-cysteine + N(6)-ubiquitinyl-[acceptor protein]-L-lysine.. It participates in protein modification; protein ubiquitination. Functionally, E3 ubiquitin-protein ligase. E3 ubiquitin ligases accept ubiquitin from an E2 ubiquitin-conjugating enzyme in the form of a thioester and then directly transfer the ubiquitin to targeted substrates. The chain is Probable E3 ubiquitin-protein ligase MARCHF10 (Marchf10) from Rattus norvegicus (Rat).